A 155-amino-acid chain; its full sequence is uncharacterized protein (155 aa).

This is an uncharacterized protein from Methanocaldococcus jannaschii (strain ATCC 43067 / DSM 2661 / JAL-1 / JCM 10045 / NBRC 100440) (Methanococcus jannaschii).